The sequence spans 713 residues: MSQSSRLSALPIFQASLSASQSPRYIFSSQNGTRIVFIQDNIIRWYNVLTDSLYHSLNFSRHLVLDDTFHVISSTSGDLLCLFNDNEIFVMEVPWGYSNVEDVSIQDAFQIFHYSIDEEEVGPKSSIKKVLFHPKSYRDSCIVVLKEDDTITMFDILNSQEKPIVLNKPNNSFGLDARVNDITDLEFSKDGLTLYCLNTTEGGDIFAFYPFLPSVLLLNEKDLNLILNKSLVMYESLDSTTDVIVKRNVIKQLQFVSKLHENWNSRFGKVDIQKEYRLAKVQGPFTINPFPGELYDYTATNIATILIDNGQNEIVCVSFDDGSLILLFKDLEMSMSWDVDNYVYNNSLVLIERVKLQREIKSLITLPEQLGKLYVISDNIIQQVNFMSWASTLSKCINESDLNPLAGLKFESKLEDIATIERIPNLAYINWNDQSNLALMSNKTLTFQNISSDMKPQSTAAETSISTEKSDTVGDGFKMSFTQPINEILILNDNFQKACISPCERIIPSADRQIPLKNEASENQLEIFTDISKEFLQRIVKAQTLGVSIHNRIHEQQFELTRQLQSTCKIISKDDDLRRKFEAQNKKWDAQLSRQSELMERFSKLSKKLSQIAESNKFKEKKISHGEMKWFKEIRNQILQFNSFVHSQKSLQQDLSYLKSELTRIEAETIKVDKKSQNEWDELRKMLEIDSKIIKECNEELLQVSQEFTTKTQ.

An interaction with NUP116 region spans residues 1-409 (MSQSSRLSAL…SDLNPLAGLK (409 aa)). Residues 463-713 (TSISTEKSDT…VSQEFTTKTQ (251 aa)) are interaction with NSP1 and NUP159. Residues 582-713 (EAQNKKWDAQ…VSQEFTTKTQ (132 aa)) are a coiled coil. The Bipartite nuclear localization signal signature appears at 607–623 (KKLSQIAESNKFKEKKI).

In terms of assembly, component of the nuclear pore complex (NPC). NPC constitutes the exclusive means of nucleocytoplasmic transport. NPCs allow the passive diffusion of ions and small molecules and the active, nuclear transport receptor-mediated bidirectional transport of macromolecules such as proteins, RNAs, ribonucleoparticles (RNPs), and ribosomal subunits across the nuclear envelope. Due to its 8-fold rotational symmetry, all subunits are present with 8 copies or multiples thereof. NUP82 is part of the NUP82 subcomplex. This subcomplex is the base for interactions with NUP116 and GLE2, with NUP42 and GLE1 and with DYN2.

The protein localises to the nucleus. The protein resides in the nuclear pore complex. Its subcellular location is the nucleus membrane. Functionally, functions as a component of the nuclear pore complex (NPC). NPC components, collectively referred to as nucleoporins (NUPs), can play the role of both NPC structural components and of docking or interaction partners for transiently associated nuclear transport factors. It is specifically involved as part of the NUP82-NUP159-NSP1 subcomplex in nuclear mRNA and pre-ribosome export by acting as a linker tethering nucleoporins that are directly involved in nuclear transport to the NPC via its coiled-coil domain. The polypeptide is Nucleoporin NUP82 (NUP82) (Saccharomyces cerevisiae (strain ATCC 204508 / S288c) (Baker's yeast)).